The chain runs to 1142 residues: Enamelin (1142 aa).

The signal sequence occupies residues 1–38 (MLLSCRHGASSPKLDNLVPSGKMKILLVFLGLLCYSAA). Phosphoserine is present on Ser-53. Disordered regions lie at residues 90–347 (YQMP…FYRN), 374–513 (YRRV…IIPK), 543–587 (TEGI…LSHG), and 603–662 (RENS…FPGQ). Pro residues predominate over residues 128 to 148 (QPQPKTPTPKQPLNEPSPTPT). Residues Ser-191 and Ser-216 each carry the phosphoserine modification. Basic and acidic residues predominate over residues 223–234 (DFEKPKEKDPPK). 2 stretches are compositionally biased toward polar residues: residues 243-303 (SVNT…SQSP) and 381-395 (TARS…NSAN). Asn-245, Asn-252, Asn-264, and Asn-291 each carry an N-linked (GlcNAc...) asparagine glycan. A propeptide spanning residues 277–514 (NPRSNPTGQN…QTQTQIIPKG (238 aa)) is cleaved from the precursor. Over residues 431–442 (PREKQVSQKERT) the composition is skewed to basic and acidic residues. Positions 453-467 (WRNSQDYGINKSNYK) are enriched in polar residues. A glycan (N-linked (GlcNAc...) asparagine) is linked at Asn-462. Hydroxyproline is present on Pro-547. Positions 570 to 582 (FKEDPGRQEEHLP) are enriched in basic and acidic residues. Positions 666–669 (DMEE) are excised as a propeptide. Residues 787-816 (NLYKTPTSSPHQKENQPYSNNSPAGLQKNP) show a composition bias toward polar residues. Disordered regions lie at residues 787-820 (NLYK…TWHE), 921-965 (TSIV…SQLS), and 1020-1049 (VFGT…QQRQ). An N-linked (GlcNAc...) asparagine glycan is attached at Asn-929. Residues 952 to 965 (LRRSTPCSVKSQLS) show a composition bias toward polar residues. Residue Asn-1040 is glycosylated (N-linked (GlcNAc...) asparagine).

In terms of processing, proteolytically cleaved into several smaller polypeptides. Cleavage of N-terminal region of enamelin occurs soon after secretion. Phosphorylated by FAM20C in vitro. As to expression, expressed by secretory-phase ameloblasts. Intact enamelin and large-molecular-weight enamelins are limited to the most superficial layer of the developing enamel matrix, while low-molecular-weight enamelins are observed in deeper enamelin. Preferential localization among the crystallites in rod and interrod enamel.

It is found in the secreted. It localises to the extracellular space. The protein resides in the extracellular matrix. Functionally, involved in the mineralization and structural organization of enamel. Involved in the extension of enamel during the secretory stage of dental enamel formation. The polypeptide is Enamelin (ENAM) (Sus scrofa (Pig)).